Here is a 245-residue protein sequence, read N- to C-terminus: Probable septum site-determining protein MinC (245 aa).

Over residues 113 to 132 (RERPLEPLVGEEKKKPEKPP) the composition is skewed to basic and acidic residues. The disordered stretch occupies residues 113 to 138 (RERPLEPLVGEEKKKPEKPPEPTIKP).

It belongs to the MinC family. Interacts with MinD and FtsZ.

Cell division inhibitor that blocks the formation of polar Z ring septums. Rapidly oscillates between the poles of the cell to destabilize FtsZ filaments that have formed before they mature into polar Z rings. Prevents FtsZ polymerization. In Pseudomonas fluorescens (strain SBW25), this protein is Probable septum site-determining protein MinC.